The sequence spans 377 residues: Chaperone protein DnaJ (377 aa).

One can recognise a J domain in the interval 5-70 (DYYELLGLQK…EKKAKYDQFG (66 aa)). The CR-type zinc finger occupies 137 to 219 (GVEKEISVTR…CRGKGSVRKT (83 aa)). 8 residues coordinate Zn(2+): Cys-150, Cys-153, Cys-167, Cys-170, Cys-193, Cys-196, Cys-207, and Cys-210. CXXCXGXG motif repeat units follow at residues 150–157 (CEHCHGSG), 167–174 (CPTCSGSG), 193–200 (CDTCRGTG), and 207–214 (CSECRGKG).

Belongs to the DnaJ family. In terms of assembly, homodimer. Requires Zn(2+) as cofactor.

It is found in the cytoplasm. Participates actively in the response to hyperosmotic and heat shock by preventing the aggregation of stress-denatured proteins and by disaggregating proteins, also in an autonomous, DnaK-independent fashion. Unfolded proteins bind initially to DnaJ; upon interaction with the DnaJ-bound protein, DnaK hydrolyzes its bound ATP, resulting in the formation of a stable complex. GrpE releases ADP from DnaK; ATP binding to DnaK triggers the release of the substrate protein, thus completing the reaction cycle. Several rounds of ATP-dependent interactions between DnaJ, DnaK and GrpE are required for fully efficient folding. Also involved, together with DnaK and GrpE, in the DNA replication of plasmids through activation of initiation proteins. The chain is Chaperone protein DnaJ from Clostridium beijerinckii (strain ATCC 51743 / NCIMB 8052) (Clostridium acetobutylicum).